The sequence spans 107 residues: Small integral membrane protein 19 (107 aa).

Residues 25–43 traverse the membrane as a helical segment; that stretch reads ATNVYLIVILVSFGLFMYA.

It belongs to the SMIM19 family.

The protein resides in the membrane. The protein is Small integral membrane protein 19 (SMIM19) of Homo sapiens (Human).